The sequence spans 318 residues: Acyl-CoA dehydrogenase IpdE2 (318 aa).

FAD is bound by residues arginine 210 and glycine 277.

Belongs to the acyl-CoA dehydrogenase family. In terms of assembly, heterotetramer composed of 2 IpdE1 subunits and 2 IpdE2 subunits. The cofactor is FAD.

It carries out the reaction 3-[(3aS,4S,5R,7aS)-5-hydroxy-7a-methyl-1-oxo-octahydro-1H-inden-4-yl]propanoyl-CoA + A = (2E)-3-[(3aS,4S,5R,7aS)-5-hydroxy-7a-methyl-1-oxo-octahydro-1H-inden-4-yl]prop-2-enoyl-CoA + AH2. It participates in steroid metabolism; cholesterol degradation. In terms of biological role, involved in cholesterol degradation. Catalyzes the dehydrogenation of 5OH-HIP-CoA to 5OH-HIPE-CoA. Can also use octanoyl-CoA and dihydroferuloyl-CoA, with lower efficiency. Cannot use 3-oxo-4-pregnene-20-carboxyl-CoA (3-OPC-CoA). This Mycobacterium tuberculosis (strain ATCC 25618 / H37Rv) protein is Acyl-CoA dehydrogenase IpdE2.